Here is a 113-residue protein sequence, read N- to C-terminus: Iron-sulfur cluster insertion protein ErpA (113 aa).

Residues Cys41, Cys105, and Cys107 each coordinate iron-sulfur cluster.

The protein belongs to the HesB/IscA family. In terms of assembly, homodimer. The cofactor is iron-sulfur cluster.

Its function is as follows. Required for insertion of 4Fe-4S clusters for at least IspG. This Histophilus somni (strain 2336) (Haemophilus somnus) protein is Iron-sulfur cluster insertion protein ErpA.